Here is a 171-residue protein sequence, read N- to C-terminus: MAEKRNIFLVGPMGAGKSTIGRHLAQMLHLEFHDSDQEIEQRTGADIAWVFDVEGEEGFRRREAQVIADLSEKQGIVLATGGGSVQSKDIRNHLSARGIVVYLETTIDKQVARTQRDKRRPLLQVDDPREVLENLAEIRNPLYEEIADVIVKTDDQSAKIVANQIIEQLGF.

14-19 (GAGKST) provides a ligand contact to ATP. Position 18 (Ser-18) interacts with Mg(2+). Positions 36, 60, and 82 each coordinate substrate. Residue Arg-120 participates in ATP binding. Residue Arg-139 participates in substrate binding. Residue Gln-156 coordinates ATP.

It belongs to the shikimate kinase family. Monomer. It depends on Mg(2+) as a cofactor.

Its subcellular location is the cytoplasm. The enzyme catalyses shikimate + ATP = 3-phosphoshikimate + ADP + H(+). Its pathway is metabolic intermediate biosynthesis; chorismate biosynthesis; chorismate from D-erythrose 4-phosphate and phosphoenolpyruvate: step 5/7. Catalyzes the specific phosphorylation of the 3-hydroxyl group of shikimic acid using ATP as a cosubstrate. This chain is Shikimate kinase, found in Shewanella baltica (strain OS195).